A 221-amino-acid polypeptide reads, in one-letter code: Ribosomal RNA small subunit methyltransferase G 3 (221 aa).

S-adenosyl-L-methionine contacts are provided by residues G85, F90, 136–137 (IE), and R150.

The protein belongs to the methyltransferase superfamily. RNA methyltransferase RsmG family.

Its subcellular location is the cytoplasm. The enzyme catalyses guanosine(527) in 16S rRNA + S-adenosyl-L-methionine = N(7)-methylguanosine(527) in 16S rRNA + S-adenosyl-L-homocysteine. In terms of biological role, specifically methylates the N7 position of guanine in position 527 of 16S rRNA. The polypeptide is Ribosomal RNA small subunit methyltransferase G 3 (Bdellovibrio bacteriovorus (strain ATCC 15356 / DSM 50701 / NCIMB 9529 / HD100)).